The chain runs to 252 residues: MQIESDNQVTNQSYSFFRQENTILDDKKFMEILQKWGLQHSIKVSTFLFDIKFDHLNPNQFLLDLFNSKDVRGSLHYVSFKQNVLLSQIKFQPLTCKSIKLDLFDKLTEDKIVVKGHIKQCFEEQFENIQIADELRKALVLEDSEQYCVFNEADRQELLFKLFQILVLGGQLCQYEDEIQAYLDWTKYLYKNTVNARKYADKDEIYIDSYAYDIRKLENSYSSDHPQNVMYVVVNPSLRIVNIIENQWLKVW.

Belongs to the CFAP300 family.

The protein localises to the cytoplasm. Its subcellular location is the cytoskeleton. The protein resides in the cilium axoneme. Functionally, cilium- and flagellum-specific protein that plays a role in axonemal structure organization and motility. Plays a role in outer and inner axonemal dynein arm assembly. The polypeptide is Cilia- and flagella-associated protein 300 (Paramecium tetraurelia).